We begin with the raw amino-acid sequence, 391 residues long: NADH-quinone oxidoreductase subunit D (391 aa).

The protein belongs to the complex I 49 kDa subunit family. In terms of assembly, NDH-1 is composed of 14 different subunits. Subunits NuoB, C, D, E, F, and G constitute the peripheral sector of the complex.

It is found in the cell inner membrane. It carries out the reaction a quinone + NADH + 5 H(+)(in) = a quinol + NAD(+) + 4 H(+)(out). In terms of biological role, NDH-1 shuttles electrons from NADH, via FMN and iron-sulfur (Fe-S) centers, to quinones in the respiratory chain. The immediate electron acceptor for the enzyme in this species is believed to be ubiquinone. Couples the redox reaction to proton translocation (for every two electrons transferred, four hydrogen ions are translocated across the cytoplasmic membrane), and thus conserves the redox energy in a proton gradient. The protein is NADH-quinone oxidoreductase subunit D of Pelagibacter ubique (strain HTCC1062).